We begin with the raw amino-acid sequence, 263 residues long: 3-methyl-2-oxobutanoate hydroxymethyltransferase (263 aa).

Mg(2+) contacts are provided by Asp45 and Asp84. 3-methyl-2-oxobutanoate contacts are provided by residues 45 to 46 (DS), Asp84, and Lys112. Residue Glu114 coordinates Mg(2+). Catalysis depends on Glu181, which acts as the Proton acceptor.

The protein belongs to the PanB family. As to quaternary structure, homodecamer; pentamer of dimers. Requires Mg(2+) as cofactor.

It localises to the cytoplasm. The catalysed reaction is 3-methyl-2-oxobutanoate + (6R)-5,10-methylene-5,6,7,8-tetrahydrofolate + H2O = 2-dehydropantoate + (6S)-5,6,7,8-tetrahydrofolate. It participates in cofactor biosynthesis; (R)-pantothenate biosynthesis; (R)-pantoate from 3-methyl-2-oxobutanoate: step 1/2. Catalyzes the reversible reaction in which hydroxymethyl group from 5,10-methylenetetrahydrofolate is transferred onto alpha-ketoisovalerate to form ketopantoate. The chain is 3-methyl-2-oxobutanoate hydroxymethyltransferase from Proteus mirabilis (strain HI4320).